The primary structure comprises 196 residues: Small ribosomal subunit protein uS4c (196 aa).

Residues 16 to 36 (GALPGLTRKTPKSGSNLKKKF) are disordered. Residues 89-169 (MRLDNILFRL…LPKHLTIDTL (81 aa)) enclose the S4 RNA-binding domain.

Belongs to the universal ribosomal protein uS4 family. Part of the 30S ribosomal subunit. Contacts protein S5. The interaction surface between S4 and S5 is involved in control of translational fidelity.

The protein localises to the plastid. It is found in the chloroplast. Its function is as follows. One of the primary rRNA binding proteins, it binds directly to 16S rRNA where it nucleates assembly of the body of the 30S subunit. With S5 and S12 plays an important role in translational accuracy. This Cinna latifolia (Drooping woodreed) protein is Small ribosomal subunit protein uS4c (rps4).